Here is a 93-residue protein sequence, read N- to C-terminus: Putative regulatory protein Cthe_1316 (93 aa).

The tract at residues 74-93 (RLNTKEAEDVEVDDEEEIDE) is disordered. Residues 81–93 (EDVEVDDEEEIDE) are compositionally biased toward acidic residues.

The protein belongs to the RemA family.

The polypeptide is Putative regulatory protein Cthe_1316 (Acetivibrio thermocellus (strain ATCC 27405 / DSM 1237 / JCM 9322 / NBRC 103400 / NCIMB 10682 / NRRL B-4536 / VPI 7372) (Clostridium thermocellum)).